The chain runs to 307 residues: Myeloid-associated differentiation marker homolog (307 aa).

MARVEL domains are found at residues 15–148 (TLKS…AKPG) and 153–304 (YMAT…RLIF). A run of 8 helical transmembrane segments spans residues 19–39 (PVGILRILEVIFACVTFSLVV), 51–71 (LCMFCWCFCFAVSLVILIVEF), 85–105 (FPITFAMYAVLMCLSATVIYP), 123–143 (IVAIVFSCLTTLAYIIEVSLT), 156–176 (TTPGLLKVLETFIACIIFVFI), 190–210 (WCLAVYCICFILSIVVIILCV), 228–248 (YALLAVLMYASAMIIWPIFSF), and 278–298 (MVAVAVLTAVNLIAYVMDLVY).

The protein belongs to the MAL family.

The protein resides in the membrane. The protein is Myeloid-associated differentiation marker homolog (myadm) of Xenopus laevis (African clawed frog).